A 143-amino-acid polypeptide reads, in one-letter code: Transcriptional regulator MraZ (143 aa).

2 consecutive SpoVT-AbrB domains span residues 5–47 (EYHH…PIEE) and 76–119 (AMES…SAER).

Belongs to the MraZ family. Forms oligomers.

It is found in the cytoplasm. Its subcellular location is the nucleoid. The chain is Transcriptional regulator MraZ from Lactobacillus gasseri (strain ATCC 33323 / DSM 20243 / BCRC 14619 / CIP 102991 / JCM 1131 / KCTC 3163 / NCIMB 11718 / NCTC 13722 / AM63).